The chain runs to 958 residues: Glycine dehydrogenase (decarboxylating) (958 aa).

Lysine 703 is subject to N6-(pyridoxal phosphate)lysine.

This sequence belongs to the GcvP family. The glycine cleavage system is composed of four proteins: P, T, L and H. Pyridoxal 5'-phosphate serves as cofactor.

The enzyme catalyses N(6)-[(R)-lipoyl]-L-lysyl-[glycine-cleavage complex H protein] + glycine + H(+) = N(6)-[(R)-S(8)-aminomethyldihydrolipoyl]-L-lysyl-[glycine-cleavage complex H protein] + CO2. The glycine cleavage system catalyzes the degradation of glycine. The P protein binds the alpha-amino group of glycine through its pyridoxal phosphate cofactor; CO(2) is released and the remaining methylamine moiety is then transferred to the lipoamide cofactor of the H protein. The protein is Glycine dehydrogenase (decarboxylating) of Nitrobacter hamburgensis (strain DSM 10229 / NCIMB 13809 / X14).